The following is a 269-amino-acid chain: 4-hydroxy-tetrahydrodipicolinate reductase (269 aa).

NAD(+)-binding positions include 10–15 (GANGRM), Glu36, 99–101 (GTT), and 123–126 (AANF). Residue His156 is the Proton donor/acceptor of the active site. (S)-2,3,4,5-tetrahydrodipicolinate is bound at residue His157. Lys160 (proton donor) is an active-site residue. Position 166–167 (166–167 (GT)) interacts with (S)-2,3,4,5-tetrahydrodipicolinate.

The protein belongs to the DapB family.

The protein localises to the cytoplasm. It carries out the reaction (S)-2,3,4,5-tetrahydrodipicolinate + NAD(+) + H2O = (2S,4S)-4-hydroxy-2,3,4,5-tetrahydrodipicolinate + NADH + H(+). It catalyses the reaction (S)-2,3,4,5-tetrahydrodipicolinate + NADP(+) + H2O = (2S,4S)-4-hydroxy-2,3,4,5-tetrahydrodipicolinate + NADPH + H(+). Its pathway is amino-acid biosynthesis; L-lysine biosynthesis via DAP pathway; (S)-tetrahydrodipicolinate from L-aspartate: step 4/4. Catalyzes the conversion of 4-hydroxy-tetrahydrodipicolinate (HTPA) to tetrahydrodipicolinate. The chain is 4-hydroxy-tetrahydrodipicolinate reductase from Neisseria meningitidis serogroup B (strain ATCC BAA-335 / MC58).